A 272-amino-acid chain; its full sequence is Prephenate dehydratase (272 aa).

Residues 4–179 (AVIYTLPKGT…NKTRFILIGK (176 aa)) enclose the Prephenate dehydratase domain. Residues 194-269 (IVFELKEDKP…TFINLLGKYP (76 aa)) form the ACT domain.

Homodimer.

It catalyses the reaction prephenate + H(+) = 3-phenylpyruvate + CO2 + H2O. It functions in the pathway amino-acid biosynthesis; L-phenylalanine biosynthesis; phenylpyruvate from prephenate: step 1/1. Its activity is regulated as follows. Inhibited by L-phenylalanine but not by L-tyrosine or L-tryptophan. This chain is Prephenate dehydratase (pheA), found in Methanocaldococcus jannaschii (strain ATCC 43067 / DSM 2661 / JAL-1 / JCM 10045 / NBRC 100440) (Methanococcus jannaschii).